We begin with the raw amino-acid sequence, 306 residues long: Putative S-adenosyl-L-methionine-dependent methyltransferase FRAAL5401 (306 aa).

Residues D126 and 155–156 (DL) contribute to the S-adenosyl-L-methionine site. The disordered stretch occupies residues 201–225 (LSAPESRVATENRPNPKPGDEDRTK).

It belongs to the UPF0677 family.

Functionally, exhibits S-adenosyl-L-methionine-dependent methyltransferase activity. This chain is Putative S-adenosyl-L-methionine-dependent methyltransferase FRAAL5401, found in Frankia alni (strain DSM 45986 / CECT 9034 / ACN14a).